Consider the following 504-residue polypeptide: 2,3-bisphosphoglycerate-independent phosphoglycerate mutase (504 aa).

D13 and S63 together coordinate Mn(2+). S63 serves as the catalytic Phosphoserine intermediate. Substrate is bound by residues H124, 153 to 154 (RD), R183, R189, 254 to 257 (RADR), and K330. Mn(2+)-binding residues include D397, H401, D438, H439, and H457.

Belongs to the BPG-independent phosphoglycerate mutase family. Monomer. Requires Mn(2+) as cofactor.

It carries out the reaction (2R)-2-phosphoglycerate = (2R)-3-phosphoglycerate. The protein operates within carbohydrate degradation; glycolysis; pyruvate from D-glyceraldehyde 3-phosphate: step 3/5. Functionally, catalyzes the interconversion of 2-phosphoglycerate and 3-phosphoglycerate. The chain is 2,3-bisphosphoglycerate-independent phosphoglycerate mutase from Rhodopseudomonas palustris (strain ATCC BAA-98 / CGA009).